The chain runs to 156 residues: Cyclic pyranopterin monophosphate synthase (156 aa).

Substrate contacts are provided by residues 73–75 (LCH) and 110–111 (ME). The active site involves D125.

The protein belongs to the MoaC family. Homohexamer; trimer of dimers.

It carries out the reaction (8S)-3',8-cyclo-7,8-dihydroguanosine 5'-triphosphate = cyclic pyranopterin phosphate + diphosphate. It participates in cofactor biosynthesis; molybdopterin biosynthesis. In terms of biological role, catalyzes the conversion of (8S)-3',8-cyclo-7,8-dihydroguanosine 5'-triphosphate to cyclic pyranopterin monophosphate (cPMP). This chain is Cyclic pyranopterin monophosphate synthase, found in Pseudomonas putida (strain GB-1).